The primary structure comprises 745 residues: Cellulose synthase 1 catalytic subunit [UDP-forming] (745 aa).

3 consecutive transmembrane segments (helical) span residues 29–49 (YVVG…TLSL), 106–126 (GILG…LFLS), and 153–173 (IFIP…LGAL). Positions 147-240 (EWPTVDIFIP…HILILDCDHI (94 aa)) are catalytic subdomain A. Asp-189 is an active-site residue. Substrate-binding residues include Asp-236 and Asp-238. Positions 317–377 (KAIEEIGGFA…GQRMRWARGM (61 aa)) are catalytic subdomain B. Residue Asp-333 is part of the active site. 6 consecutive transmembrane segments (helical) span residues 407 to 427 (FFFA…LFFS), 430 to 450 (IIAA…FHSI), 468 to 488 (VYET…MLFP), 515 to 535 (NIIF…ALIF), 547 to 567 (ALNC…ISVG), and 649 to 669 (AVFT…RFVF). Residues 572-670 (QLRQSHRIEA…EAAVVRFVFG (99 aa)) enclose the PilZ domain. The segment covering 708–717 (IAHSRPKKKP) has biased composition (basic residues). The segment at 708–745 (IAHSRPKKKPIALPVERREPTTSQGGQKQEGKISRAAS) is disordered. The segment covering 736–745 (QEGKISRAAS) has biased composition (basic and acidic residues).

The protein belongs to the glycosyltransferase 2 family. Mg(2+) serves as cofactor.

It is found in the cell inner membrane. It catalyses the reaction [(1-&gt;4)-beta-D-glucosyl](n) + UDP-alpha-D-glucose = [(1-&gt;4)-beta-D-glucosyl](n+1) + UDP + H(+). Its pathway is glycan metabolism; bacterial cellulose biosynthesis. Its activity is regulated as follows. Activated by bis-(3'-5') cyclic diguanylic acid (c-di-GMP). Its function is as follows. Catalytic subunit of cellulose synthase. It polymerizes uridine 5'-diphosphate glucose to cellulose. The thick cellulosic mats generated by this enzyme probably provide a specialized protective environment to the bacterium. The polypeptide is Cellulose synthase 1 catalytic subunit [UDP-forming] (bcsAI) (Komagataeibacter xylinus (Gluconacetobacter xylinus)).